Consider the following 80-residue polypeptide: MAVGISPGELRELTDEELIERLRESKEELFNLRFQMATGQLNNNRRLRTVRHEIARVYTVLRERELGLASGPGGANGEES.

It belongs to the universal ribosomal protein uL29 family.

The protein is Large ribosomal subunit protein uL29 (rpmC) of Mycobacterium leprae (strain TN).